Here is a 163-residue protein sequence, read N- to C-terminus: Inorganic pyrophosphatase (163 aa).

Glu9 contacts Mg(2+). Substrate is bound by residues Lys17, Arg31, and Tyr43. Positions 53, 58, 85, and 90 each coordinate Mg(2+). Asp90 serves as the catalytic Proton acceptor. Tyr127 is a binding site for substrate.

Belongs to the PPase family. In terms of assembly, homohexamer. Mg(2+) serves as cofactor.

The protein resides in the cytoplasm. It catalyses the reaction diphosphate + H2O = 2 phosphate + H(+). Its function is as follows. Catalyzes the hydrolysis of inorganic pyrophosphate (PPi) forming two phosphate ions. The protein is Inorganic pyrophosphatase of Leifsonia xyli subsp. xyli (strain CTCB07).